A 235-amino-acid chain; its full sequence is Phosphoribosylformylglycinamidine synthase subunit PurQ (235 aa).

The Glutamine amidotransferase type-1 domain occupies 4–234 (GILVFPGTNC…VQHLTGRVIR (231 aa)). Cys-86 (nucleophile) is an active-site residue. Active-site residues include His-203 and Glu-205.

Part of the FGAM synthase complex composed of 1 PurL, 1 PurQ and 2 PurS subunits.

It localises to the cytoplasm. The catalysed reaction is N(2)-formyl-N(1)-(5-phospho-beta-D-ribosyl)glycinamide + L-glutamine + ATP + H2O = 2-formamido-N(1)-(5-O-phospho-beta-D-ribosyl)acetamidine + L-glutamate + ADP + phosphate + H(+). It carries out the reaction L-glutamine + H2O = L-glutamate + NH4(+). It functions in the pathway purine metabolism; IMP biosynthesis via de novo pathway; 5-amino-1-(5-phospho-D-ribosyl)imidazole from N(2)-formyl-N(1)-(5-phospho-D-ribosyl)glycinamide: step 1/2. Functionally, part of the phosphoribosylformylglycinamidine synthase complex involved in the purines biosynthetic pathway. Catalyzes the ATP-dependent conversion of formylglycinamide ribonucleotide (FGAR) and glutamine to yield formylglycinamidine ribonucleotide (FGAM) and glutamate. The FGAM synthase complex is composed of three subunits. PurQ produces an ammonia molecule by converting glutamine to glutamate. PurL transfers the ammonia molecule to FGAR to form FGAM in an ATP-dependent manner. PurS interacts with PurQ and PurL and is thought to assist in the transfer of the ammonia molecule from PurQ to PurL. The protein is Phosphoribosylformylglycinamidine synthase subunit PurQ of Symbiobacterium thermophilum (strain DSM 24528 / JCM 14929 / IAM 14863 / T).